We begin with the raw amino-acid sequence, 680 residues long: UvrABC system protein C (680 aa).

Positions 66 to 144 (NSPGVYRMFN…IKRLRPRFNV (79 aa)) constitute a GIY-YIG domain. The 36-residue stretch at 254–289 (QKVKSHMAEAMNQAAEDLDFERAAIYRDRLAALSHV) folds into the UVR domain.

The protein belongs to the UvrC family. In terms of assembly, interacts with UvrB in an incision complex.

The protein resides in the cytoplasm. Its function is as follows. The UvrABC repair system catalyzes the recognition and processing of DNA lesions. UvrC both incises the 5' and 3' sides of the lesion. The N-terminal half is responsible for the 3' incision and the C-terminal half is responsible for the 5' incision. The chain is UvrABC system protein C from Rhizobium johnstonii (strain DSM 114642 / LMG 32736 / 3841) (Rhizobium leguminosarum bv. viciae).